The sequence spans 78 residues: Large ribosomal subunit protein bL28 (78 aa).

It belongs to the bacterial ribosomal protein bL28 family.

The chain is Large ribosomal subunit protein bL28 from Synechococcus sp. (strain ATCC 27144 / PCC 6301 / SAUG 1402/1) (Anacystis nidulans).